Here is a 180-residue protein sequence, read N- to C-terminus: UPF0134 protein MPN_368 (180 aa).

Belongs to the UPF0134 family.

The protein is UPF0134 protein MPN_368 of Mycoplasma pneumoniae (strain ATCC 29342 / M129 / Subtype 1) (Mycoplasmoides pneumoniae).